Consider the following 447-residue polypeptide: Phosphoglucosamine mutase (447 aa).

Residue serine 102 is the Phosphoserine intermediate of the active site. Residues serine 102, aspartate 241, aspartate 243, and aspartate 245 each contribute to the Mg(2+) site. Position 102 is a phosphoserine (serine 102).

This sequence belongs to the phosphohexose mutase family. It depends on Mg(2+) as a cofactor. Post-translationally, activated by phosphorylation.

It catalyses the reaction alpha-D-glucosamine 1-phosphate = D-glucosamine 6-phosphate. Catalyzes the conversion of glucosamine-6-phosphate to glucosamine-1-phosphate. The sequence is that of Phosphoglucosamine mutase from Pseudomonas syringae pv. syringae (strain B728a).